Here is a 144-residue protein sequence, read N- to C-terminus: Ribonuclease VapC45 (144 aa).

Aspartate 7 and aspartate 102 together coordinate Mg(2+).

The protein belongs to the PINc/VapC protein family. Mg(2+) serves as cofactor.

Its function is as follows. Toxic component of a type II toxin-antitoxin (TA) system. An RNase. Its cognate antitoxin is VapB45. The polypeptide is Ribonuclease VapC45 (Mycobacterium tuberculosis (strain CDC 1551 / Oshkosh)).